A 181-amino-acid polypeptide reads, in one-letter code: Akirin-2 (181 aa).

The disordered stretch occupies residues Ser-18–Pro-48. The short motif at Pro-23–Cys-28 is the Nuclear localization signal element. Residues Ser-178–Ser-181 carry the SYVS motif motif.

The protein belongs to the akirin family. As to quaternary structure, homodimer. Interacts with actl6a/baf53a. Interacts with gmnn.

It localises to the nucleus. Molecular adapter that acts as a bridge between a variety of multiprotein complexes, and which is involved in embryonic development, immunity, myogenesis and brain development. Plays a key role in nuclear protein degradation by promoting import of proteasomes into the nucleus: acts by bridging fully assembled 20S proteasomes with nuclear import receptor ipo9. Involved in both neural precursor maintenance and terminal neural differentiation: bridges gmnn and actl6a/baf53a in neural progenitor cells, antagonizing the activity of gmnn, thereby suppressing sox2 expression. Also required for proper activation of neurod1 and neuronal differentiation. Involved in myogenesis: required for skeletal muscle formation and skeletal development, possibly by regulating expression of muscle differentiation factors. The sequence is that of Akirin-2 from Xenopus laevis (African clawed frog).